Consider the following 52-residue polypeptide: Proteinase inhibitor (52 aa).

Residue Gln1 is modified to Pyrrolidone carboxylic acid. 4 disulfide bridges follow: Cys3-Cys40, Cys6-Cys24, Cys7-Cys36, and Cys13-Cys49.

Belongs to the protease inhibitor I20 (potato type II proteinase inhibitor) family.

The protein localises to the secreted. The protein is Proteinase inhibitor of Solanum melongena (Eggplant).